Consider the following 478-residue polypeptide: Zinc metalloproteinase/disintegrin (478 aa).

The first 20 residues, 1–20 (MIQVLLVTICLAVFPYQGSS), serve as a signal peptide directing secretion. The propeptide occupies 21–194 (KTLKSGNVND…KASQLNLTPE (174 aa)). At Q195 the chain carries Pyrrolidone carboxylic acid. The 197-residue stretch at 201–397 (RYIELVIVAD…RNPQCILNQP (197 aa)) folds into the Peptidase M12B domain. Ca(2+) is bound by residues E204 and D288. Disulfide bonds link C312–C392, C352–C376, and C354–C359. H337 contributes to the Zn(2+) binding site. E338 is an active-site residue. Residues H341 and H347 each contribute to the Zn(2+) site. Positions 392 and 395 each coordinate Ca(2+). A propeptide spanning residues 398–413 (LRTDTVSTPVSGNELL) is cleaved from the precursor. The Disintegrin domain occupies 405–478 (TPVSGNELLQ…SDCPRNPYKD (74 aa)). 4 cysteine pairs are disulfide-bonded: C420–C443, C434–C440, C439–C464, and C452–C471. A Cell attachment site; atypical (VGD) motif is present at residues 456-458 (VGD).

The protein belongs to the venom metalloproteinase (M12B) family. P-II subfamily. P-IIe sub-subfamily. In terms of assembly, monomer (metalloproteinase). Heterodimer; disulfide-linked (disintegrin). Zn(2+) is required as a cofactor. Expressed by the venom gland.

The protein localises to the secreted. With respect to regulation, fibrinolytic and caseinolytic activities are inhibited by Cd(2+), Cu(2+) and Co(2+) ions. Not inhibited by Mg(2+), Ca(2+) and Ba(2+). Also inhibited by EDTA, EGTA and 1,10-phenanthroline. Functionally, fibrinolytic and fibrinogenolytic metalloproteinase that hydrolyzes the Aalpha-chain and more slowly the Bbeta-chain of fibrin and fibrinogen. Its fibrinolytic activity is direct, without any plasminogen activation. Also hydrolyzes casein and B-chain of oxidized insulin. Inhibits ADP-induced and collagen-induced platelet aggregation. Shows low hemorrhagic activity. Cleaves the plasma proteinase inhibitors alpha(2)-macroglobulin (A2M) and pregnancy zone protein (PZP), and is inhibited by them. The metalloprotease has no strict P1-P1' specificity requirement. Hydrolysis at sites with a Pro residue at P1 is observed with bradykinin, substance P, PZP and alpha chain fibrinogen (FGA). Its function is as follows. Poor inhibitor of platelet aggregation. The disintegrin inhibits the adhesion of the alpha-4/beta-1 (ITGA4/ITGB1) integrin to VCAM-1. Inhibition on alpha-2b/beta-3 (ITGA2B/ITGB3) is low. In Macrovipera lebetinus (Levantine viper), this protein is Zinc metalloproteinase/disintegrin.